The chain runs to 347 residues: L-threonine 3-dehydrogenase (347 aa).

C42 contacts Zn(2+). Residues T44 and H47 each act as charge relay system in the active site. Positions 67, 68, 97, 100, 103, and 111 each coordinate Zn(2+). Residues I179, E199, R204, 266–268, and 291–292 each bind NAD(+); these read LGL and IT.

The protein belongs to the zinc-containing alcohol dehydrogenase family. In terms of assembly, homotetramer. Requires Zn(2+) as cofactor.

The protein resides in the cytoplasm. It carries out the reaction L-threonine + NAD(+) = (2S)-2-amino-3-oxobutanoate + NADH + H(+). It participates in amino-acid degradation; L-threonine degradation via oxydo-reductase pathway; glycine from L-threonine: step 1/2. Its function is as follows. Catalyzes the NAD(+)-dependent oxidation of L-threonine to 2-amino-3-ketobutyrate. This Caldanaerobacter subterraneus subsp. tengcongensis (strain DSM 15242 / JCM 11007 / NBRC 100824 / MB4) (Thermoanaerobacter tengcongensis) protein is L-threonine 3-dehydrogenase.